The chain runs to 86 residues: Probable oxaloacetate decarboxylase gamma chain 1 (86 aa).

The helical transmembrane segment at 11–33 threads the bilayer; it reads AATLMVTGMAVVFLFLTLLVYLV.

Belongs to the OadG family. In terms of assembly, heterotrimer of an alpha, a beta and a gamma subunit. The cofactor is Na(+).

It localises to the cell membrane. It catalyses the reaction oxaloacetate + 2 Na(+)(in) + H(+) = pyruvate + 2 Na(+)(out) + CO2. Functionally, catalyzes the decarboxylation of oxaloacetate coupled to Na(+) translocation. In Vibrio cholerae serotype O1 (strain ATCC 39315 / El Tor Inaba N16961), this protein is Probable oxaloacetate decarboxylase gamma chain 1 (oadG1).